The following is a 285-amino-acid chain: Bifunctional protein FolD (285 aa).

NADP(+) contacts are provided by residues 164 to 166, serine 193, and isoleucine 234; that span reads GRS.

The protein belongs to the tetrahydrofolate dehydrogenase/cyclohydrolase family. In terms of assembly, homodimer.

It carries out the reaction (6R)-5,10-methylene-5,6,7,8-tetrahydrofolate + NADP(+) = (6R)-5,10-methenyltetrahydrofolate + NADPH. The catalysed reaction is (6R)-5,10-methenyltetrahydrofolate + H2O = (6R)-10-formyltetrahydrofolate + H(+). The protein operates within one-carbon metabolism; tetrahydrofolate interconversion. Catalyzes the oxidation of 5,10-methylenetetrahydrofolate to 5,10-methenyltetrahydrofolate and then the hydrolysis of 5,10-methenyltetrahydrofolate to 10-formyltetrahydrofolate. In Desulfovibrio desulfuricans (strain ATCC 27774 / DSM 6949 / MB), this protein is Bifunctional protein FolD.